The primary structure comprises 572 residues: MAQGPSCASELHYYRALDHANAGFATGTYHLKDDLHLATPPPHPSEAPVVNPNPLATVPTPPTSGVKLSLVSVGQRNKLPVFTSKEKVTAPPFADGNPALAAIPTKDGLKRRKPKNNIIKSSSSFVSRVITHEASSKRLNDRNPDGLFAFANINRAFQWLDLSSKNKEEPLAKILFTKAHMLTHDINELTKSSSHIDIAMGSSAGDIIWYEPISQKYARINKNGVVSNSPVTHIKWIPGSENMFMAAHANGQLVVYDKEKEDALFTPEISNHSAEAMKASSRLPLQVLKSVNSRNQKTNPVALWKLANQKISQFAFSPDQRHLAVVLEDGSLRVMDYLKEEVLDIFRSYYGGLICVCWSPDGKYIVTGGQDDLVTIWSFPERKIVARCQGHNSWVSTVAFDPWRCDERTYRFGSVGDDCRLLLWDFSVGMLHRPRAHQASARQRTSMIASNTQHFNRHRADSASNRMRSDSQRTADTYNDYDSAVRHPVEPRARTALLPPIMSKIVGDDPICWLGFQEDSIMTSSLEGHIRTWDRPREGINDSYNGNTSSPAISTSAAGSGSGIADSAMGSL.

Positions 36–61 are disordered; the sequence is HLATPPPHPSEAPVVNPNPLATVPTP. WD repeat units lie at residues 226-266, 306-347, 348-387, and 390-434; these read VSNS…ALFT, LANQ…DIFR, SYYG…IVAR, and GHNS…LHRP. 2 disordered regions span residues 458–486 and 541–572; these read HRAD…SAVR and NDSY…MGSL. A WD 5 repeat occupies 506–543; that stretch reads VGDDPICWLGFQEDSIMTSSLEGHIRTWDRPREGINDS. The segment covering 549–572 has biased composition (low complexity); it reads SSPAISTSAAGSGSGIADSAMGSL.

Belongs to the WD repeat creC family. In terms of assembly, interacts with creB.

Component of the regulatory network controlling carbon source utilization through ubiquitination and deubiquitination involving creA, creB, creC, creD and acrB. Required to prevent the proteolysis of the CreB deubiquitinating enzyme in the absence of carbon catabolite repression. CreB deubiquitinating enzyme stabilized in a complex with the CreC leads to the expression of genes such as those in the proline and quinate pathways. The protein is Probable catabolite repression protein creC (creC) of Aspergillus flavus (strain ATCC 200026 / FGSC A1120 / IAM 13836 / NRRL 3357 / JCM 12722 / SRRC 167).